Here is a 258-residue protein sequence, read N- to C-terminus: Imidazole glycerol phosphate synthase subunit HisF (258 aa).

Active-site residues include D11 and D130.

The protein belongs to the HisA/HisF family. As to quaternary structure, heterodimer of HisH and HisF.

Its subcellular location is the cytoplasm. The enzyme catalyses 5-[(5-phospho-1-deoxy-D-ribulos-1-ylimino)methylamino]-1-(5-phospho-beta-D-ribosyl)imidazole-4-carboxamide + L-glutamine = D-erythro-1-(imidazol-4-yl)glycerol 3-phosphate + 5-amino-1-(5-phospho-beta-D-ribosyl)imidazole-4-carboxamide + L-glutamate + H(+). It functions in the pathway amino-acid biosynthesis; L-histidine biosynthesis; L-histidine from 5-phospho-alpha-D-ribose 1-diphosphate: step 5/9. In terms of biological role, IGPS catalyzes the conversion of PRFAR and glutamine to IGP, AICAR and glutamate. The HisF subunit catalyzes the cyclization activity that produces IGP and AICAR from PRFAR using the ammonia provided by the HisH subunit. This Yersinia pseudotuberculosis serotype IB (strain PB1/+) protein is Imidazole glycerol phosphate synthase subunit HisF.